The following is a 100-amino-acid chain: MPKRKVSSAEGAAKEEPKRRSARLSAKPPAKVEAKPKKAAAKDKSSDKKVQTKGKRGAKGKQAEVANQETKEDLPAENGETKTEESPASDEAGEKEAKSD.

A disordered region spans residues 1–100; that stretch reads MPKRKVSSAE…EAGEKEAKSD (100 aa). ADP-ribosylserine is present on serine 7. A Phosphoserine modification is found at serine 8. Lysine 14 bears the N6-acetyllysine mark. Serine 21 is modified (phosphoserine; by RPS6KA5). Serine 25 bears the ADP-ribosylserine; alternate mark. The residue at position 25 (serine 25) is a Phosphoserine; alternate; by RPS6KA5. Position 27 is an N6-acetyllysine (lysine 27). Basic and acidic residues-rich tracts occupy residues 30-50 and 69-85; these read AKVEAKPKKAAAKDKSSDKKV and ETKEDLPAENGETKTEE. Threonine 81 carries the phosphothreonine modification. Lysine 82 is modified (N6-acetyllysine). Phosphoserine occurs at positions 86, 89, and 99.

Interacts with transcriptional regulator SEHBP. Post-translationally, phosphorylation on Ser-21 and Ser-25 weakens binding to nucleosomes and increases the rate of H3 phosphorylation. Phosphorylation favors cytoplasmic localization.

Its subcellular location is the nucleus. It localises to the cytoplasm. Binds to the inner side of the nucleosomal DNA thus altering the interaction between the DNA and the histone octamer. May be involved in the process which maintains transcribable genes in a unique chromatin conformation. Inhibits the phosphorylation of nucleosomal histones H3 and H2A by RPS6KA5/MSK1 and RPS6KA3/RSK2. The protein is Non-histone chromosomal protein HMG-14 (HMGN1) of Homo sapiens (Human).